A 198-amino-acid polypeptide reads, in one-letter code: DNA damage response protein D (198 aa).

The segment at 124-198 (SAAPTDPAGP…SEAGENTPAA (75 aa)) is disordered. Residues 136–180 (PGTDRAERTAAERTASERATHDRASTERPARPRRSAEPEAVRTED) show a composition bias toward basic and acidic residues.

In terms of biological role, appears to contribute to D.radiodurans capacity to survive exposure to ionizing radiation. May play a role in DNA repair and genome reconstitution. The sequence is that of DNA damage response protein D (ddrD) from Deinococcus radiodurans (strain ATCC 13939 / DSM 20539 / JCM 16871 / CCUG 27074 / LMG 4051 / NBRC 15346 / NCIMB 9279 / VKM B-1422 / R1).